We begin with the raw amino-acid sequence, 196 residues long: Large ribosomal subunit protein eL15 (196 aa).

A disordered region spans residues 156-196 (HRGRAERGKTSAGRKGRGMRTRGRGTEKTRPSIRSHANQGK). Residues 167-178 (AGRKGRGMRTRG) are compositionally biased toward basic residues.

The protein belongs to the eukaryotic ribosomal protein eL15 family.

This Methanoregula boonei (strain DSM 21154 / JCM 14090 / 6A8) protein is Large ribosomal subunit protein eL15.